Reading from the N-terminus, the 447-residue chain is Cysteine--tRNA ligase (447 aa).

C28 provides a ligand contact to Zn(2+). The 'HIGH' region signature appears at 30-40 (PTVYNYIHVGN). The Zn(2+) site is built by C211, H236, and E240. The 'KMSKS' region motif lies at 268–272 (KMSKS). An ATP-binding site is contributed by K271.

Belongs to the class-I aminoacyl-tRNA synthetase family. As to quaternary structure, monomer. Zn(2+) serves as cofactor.

It localises to the cytoplasm. It carries out the reaction tRNA(Cys) + L-cysteine + ATP = L-cysteinyl-tRNA(Cys) + AMP + diphosphate. The polypeptide is Cysteine--tRNA ligase (Streptococcus mutans serotype c (strain ATCC 700610 / UA159)).